Reading from the N-terminus, the 365-residue chain is Anthranilate phosphoribosyltransferase (365 aa).

Residues Gly96, 99–100 (GD), Thr104, 106–109 (NIST), 124–132 (KHGNRSVSS), and Ser136 each bind 5-phospho-alpha-D-ribose 1-diphosphate. Gly96 lines the anthranilate pocket. Ser108 serves as a coordination point for Mg(2+). Residue Asn127 coordinates anthranilate. Residue Arg182 participates in anthranilate binding. Asp240 and Glu241 together coordinate Mg(2+).

It belongs to the anthranilate phosphoribosyltransferase family. As to quaternary structure, homodimer. Requires Mg(2+) as cofactor.

It carries out the reaction N-(5-phospho-beta-D-ribosyl)anthranilate + diphosphate = 5-phospho-alpha-D-ribose 1-diphosphate + anthranilate. It functions in the pathway amino-acid biosynthesis; L-tryptophan biosynthesis; L-tryptophan from chorismate: step 2/5. Its function is as follows. Catalyzes the transfer of the phosphoribosyl group of 5-phosphorylribose-1-pyrophosphate (PRPP) to anthranilate to yield N-(5'-phosphoribosyl)-anthranilate (PRA). The protein is Anthranilate phosphoribosyltransferase of Colwellia psychrerythraea (strain 34H / ATCC BAA-681) (Vibrio psychroerythus).